The primary structure comprises 842 residues: Homeobox-leucine zipper protein REVOLUTA (842 aa).

The disordered stretch occupies residues 1–20; it reads MEMAVANHRERSSDSMNRHL. Residues 7–20 are compositionally biased toward basic and acidic residues; the sequence is NHRERSSDSMNRHL. A DNA-binding region (homeobox) is located at residues 22–85; the sequence is SSGKYVRYTA…NRRCRDKQRK (64 aa). A coiled-coil region spans residues 90–121; sequence LQSVNRKLSAMNKLLMEENDRLQKQVSQLVCE. Residues 151 to 379 enclose the START domain; sequence DANSPAGLLS…LAQESNGEVV (229 aa).

It belongs to the HD-ZIP homeobox family. Class III subfamily. In terms of assembly, homodimer. Heterodimer with ZPR1, ZPR2, ZPR3 or ZPR4. Interacts with ESR1 and ESR2. Interacts with ZPR1, ZPR2, ZPR3 and ZPR4. Heterodimerization with ZPR3 prevents DNA binding by REV. Expressed in the interfascicular regions of stem and vascular bundles of young roots and leaves.

It is found in the nucleus. Functionally, probable transcription factor involved in the regulation of interfascicular fiber (cortical cells) and secondary xylem differentiation in the inflorescence stems. Required for lateral shoot meristems (LSMs) and flower meristems (FMs) initiation. May be involved in the determination of vascular patterning and organ polarity. Directly regulates the expression of AGO10, ZPR1, ZPR2, ZPR3 and ZPR4. Required to regulate adaxial-abaxial polarity and leaf axial patterning. The chain is Homeobox-leucine zipper protein REVOLUTA from Arabidopsis thaliana (Mouse-ear cress).